The chain runs to 343 residues: Flavone 3'-O-methyltransferase OMT2 (343 aa).

Asn107 is a (E)-ferulate binding site. Gly184, Asp207, Asp227, Met228, Met240, and Lys241 together coordinate S-adenosyl-L-homocysteine. His245 functions as the Proton acceptor in the catalytic mechanism. (E)-5-hydroxyferulate is bound at residue Asp246. Active-site residues include Glu273 and Glu305.

This sequence belongs to the class I-like SAM-binding methyltransferase superfamily. Cation-independent O-methyltransferase family. COMT subfamily. Homodimer.

It carries out the reaction (E)-5-hydroxyferulate + S-adenosyl-L-methionine = (E)-sinapate + S-adenosyl-L-homocysteine + H(+). It catalyses the reaction luteolin + S-adenosyl-L-methionine = chrysoeriol + S-adenosyl-L-homocysteine + H(+). The enzyme catalyses quercetin + S-adenosyl-L-methionine = isorhamnetin + S-adenosyl-L-homocysteine + H(+). The catalysed reaction is (E)-caffeate + S-adenosyl-L-methionine = (E)-ferulate + S-adenosyl-L-homocysteine + H(+). It carries out the reaction a 3'-hydroxyflavone + S-adenosyl-L-methionine = a 3'-methoxyflavone + S-adenosyl-L-homocysteine + H(+). The protein operates within flavonoid metabolism. Catalyzes the 3'-O-methylation of the flavonoids luteolin and quercetin. Catalyzes the 3- of 5-O-methylation of the phenylpropanoids caffeate and 5-hydroxyferulate. Substrate preference is 5-hydroxyferulate &gt; luteolin &gt; quercetin &gt; caffeate. Apigenin, kempferol and 3,4-dimethylquercetin do not seem to be substrates for methylation. This Chrysosplenium americanum (American golden saxifrage) protein is Flavone 3'-O-methyltransferase OMT2.